Here is a 1633-residue protein sequence, read N- to C-terminus: Laminin-like protein lam-2 (1633 aa).

A signal peptide spans 1-19 (MTSILWLFSLAVLWHMGQP). The Laminin N-terminal domain occupies 47–286 (QPQRCVPDFV…AISDFAVGGR (240 aa)). N-linked (GlcNAc...) asparagine glycosylation is found at Asn-116 and Asn-136. 16 disulfide bridges follow: Cys-287/Cys-296, Cys-289/Cys-310, Cys-312/Cys-321, Cys-324/Cys-344, Cys-347/Cys-356, Cys-349/Cys-372, Cys-375/Cys-384, Cys-387/Cys-400, Cys-403/Cys-415, Cys-405/Cys-421, Cys-423/Cys-432, Cys-435/Cys-447, Cys-450/Cys-464, Cys-452/Cys-471, Cys-473/Cys-482, and Cys-485/Cys-500. Laminin EGF-like domains follow at residues 287 to 346 (CKCN…ECIA), 347 to 402 (CNCS…YCVA), 403 to 449 (CGCN…GCKN), and 450 to 502 (CGCE…GCTP). N-linked (GlcNAc...) asparagine glycosylation occurs at Asn-348. Residues 503 to 512 (CFCFGHSSIC) enclose the Laminin EGF-like 5; first part domain. Asn-522, Asn-658, and Asn-740 each carry an N-linked (GlcNAc...) asparagine glycan. The Laminin IV type A domain maps to 529 to 701 (QDKQKWAGQN…NPKQATWIEH (173 aa)). A Laminin EGF-like 5; second part domain is found at 702 to 747 (CECLPGFVGQFCESCESGFRRETKFGGPFNHCIKCDCHNHSNSCEA). Cystine bridges form between Cys-736–Cys-745, Cys-738–Cys-752, Cys-754–Cys-763, Cys-766–Cys-782, Cys-785–Cys-803, Cys-806–Cys-815, Cys-818–Cys-832, Cys-835–Cys-849, Cys-837–Cys-856, Cys-859–Cys-868, Cys-871–Cys-887, Cys-890–Cys-909, Cys-892–Cys-916, Cys-918–Cys-927, Cys-930–Cys-943, Cys-946–Cys-958, Cys-948–Cys-965, Cys-967–Cys-976, Cys-979–Cys-991, Cys-994–Cys-1006, Cys-996–Cys-1013, Cys-1015–Cys-1024, and Cys-1027–Cys-1038. The 33-residue stretch at 752-784 (CICEHNTAGDTCERCARGYYGDALQGTEEDCQK) folds into the Laminin EGF-like 6; truncated domain. Laminin EGF-like domains follow at residues 785-834 (CPCP…ECVE), 835-889 (CACS…NCQS), 890-945 (CGCF…GCQE), 946-993 (CNCD…GCQP), and 994-1040 (CDCE…GCLP). N-linked (GlcNAc...) asparagine glycosylation occurs at Asn-936. Residues Asn-1077, Asn-1183, Asn-1226, Asn-1259, Asn-1336, Asn-1452, and Asn-1528 are each glycosylated (N-linked (GlcNAc...) asparagine).

In terms of biological role, during the formation of neuromuscular junctions at the larval stage, negatively regulates membrane protrusion from body wall muscles, probably downstream of the integrin complex formed by pat-2 and pat-3. The sequence is that of Laminin-like protein lam-2 (lam-2) from Caenorhabditis elegans.